The sequence spans 175 residues: FMRFamide-like neuropeptides 1 (175 aa).

A signal peptide spans 1–21 (MTLLYQVGLLLLVAATYKVSA). A propeptide spanning residues 22–68 (ECCTPGATSDFCTVFSMLSTMEQNEVMNFIGENCDGDAEVALQKMEK) is cleaved from the precursor. At Y76 the chain carries Tyrosine amide. Residues 79 to 86 (SAAVKSLG) constitute a propeptide that is removed on maturation. F98, F108, F120, F130, F142, and F154 each carry phenylalanine amide. The propeptide occupies 157-165 (SFDNFDRES). F173 carries the post-translational modification Phenylalanine amide.

Belongs to the FARP (FMRFamide related peptide) family. Post-translationally, may be processed by convertase egl-3. In terms of tissue distribution, each flp gene is expressed in a distinct set of neurons. Flp-1 is expressed in the AVA interneurons, the M5 cholinergic pharyngeal motoneurons, and the AIA, AIY, AVE, AVK, RIG and RMG neurons.

It localises to the secreted. Functionally, together with flp-18, plays a homeostatic role by acting on the GABAergic neural transmission at neuromuscular junctions to prevent overexcitation of the locomotor circuit. In terms of biological role, inhibits the activity of dissected pharyngeal myogenic muscle system. DPNFLRF-amide: Inhibits the activity of dissected pharyngeal myogenic muscle system. Its function is as follows. Acts as a ligand for the npr-22 receptor in vitro. This is FMRFamide-like neuropeptides 1 (flp-1) from Caenorhabditis elegans.